Consider the following 41-residue polypeptide: Large ribosomal subunit protein bL36 (41 aa).

The protein belongs to the bacterial ribosomal protein bL36 family.

The protein is Large ribosomal subunit protein bL36 of Caulobacter vibrioides (strain ATCC 19089 / CIP 103742 / CB 15) (Caulobacter crescentus).